A 494-amino-acid chain; its full sequence is Catalase A (494 aa).

Over residues Met-1–Thr-23 the composition is skewed to polar residues. Residues Met-1–Gly-25 form a disordered region. Residues His-55 and Asn-127 contribute to the active site. Tyr-337 is a binding site for heme.

The protein belongs to the catalase family. Heme is required as a cofactor.

It is found in the periplasm. The enzyme catalyses 2 H2O2 = O2 + 2 H2O. Its function is as follows. Decomposes hydrogen peroxide into water and oxygen; serves to protect cells from the toxic effects of hydrogen peroxide. The polypeptide is Catalase A (katA) (Rhizobium meliloti (strain 1021) (Ensifer meliloti)).